The primary structure comprises 233 residues: MPVKLAQALANTLFPALDSQLRAGRHIGIDELDNHAFLMDFQEQLEEFYARYNVELIRAPEGFFYLRPRSTTLIPRSVLSELDMMVGKILCYLYLSPERLAHEGIFSQQELYEELLSLADESKLLKFVNQRSTGSDLDKQKLQEKVRTSLNRLRRLGMIYFMGNDSTKFRITEAVFRFGADVRSGDDQREAQLRMIRDGEAMAVENSLSLHDESDDADVTMGNAADSVEDEQE.

Residues 207–233 (SLSLHDESDDADVTMGNAADSVEDEQE) form a disordered region.

It belongs to the MukE family. As to quaternary structure, interacts, and probably forms a ternary complex, with MukF and MukB. The complex formation is stimulated by calcium or magnesium.

The protein resides in the cytoplasm. It is found in the nucleoid. Functionally, involved in chromosome condensation, segregation and cell cycle progression. May participate in facilitating chromosome segregation by condensation DNA from both sides of a centrally located replisome during cell division. Probably acts via its interaction with MukB and MukF. This chain is Chromosome partition protein MukE, found in Yersinia pestis.